The chain runs to 241 residues: Large ribosomal subunit protein uL1 (241 aa).

Belongs to the universal ribosomal protein uL1 family. Part of the 50S ribosomal subunit.

Functionally, binds directly to 23S rRNA. The L1 stalk is quite mobile in the ribosome, and is involved in E site tRNA release. Its function is as follows. Protein L1 is also a translational repressor protein, it controls the translation of the L11 operon by binding to its mRNA. This chain is Large ribosomal subunit protein uL1, found in Thermomicrobium roseum (strain ATCC 27502 / DSM 5159 / P-2).